Reading from the N-terminus, the 114-residue chain is UPF0342 protein lp_1415 (114 aa).

Belongs to the UPF0342 family.

In Lactiplantibacillus plantarum (strain ATCC BAA-793 / NCIMB 8826 / WCFS1) (Lactobacillus plantarum), this protein is UPF0342 protein lp_1415.